The primary structure comprises 173 residues: Enhancer of split mdelta protein (173 aa).

Residues 15 to 72 (YRKVTKPLLERKRRARMNLYLDELKDLIVDTMDAQGEQVSKLEKADILELTVNYLKAQ) enclose the bHLH domain. In terms of domain architecture, Orange spans 93–126 (FRAGYTQAAYEVSHIFSTVPGLDLKFGTHLMKQL). The disordered stretch occupies residues 147–173 (VNLADQKRSKSPREEDIHHGEEVWRPW). The segment covering 151 to 173 (DQKRSKSPREEDIHHGEEVWRPW) has biased composition (basic and acidic residues). The short motif at 170–173 (WRPW) is the WRPW motif element.

As to quaternary structure, transcription repression requires formation of a complex with a corepressor protein (Groucho).

It localises to the nucleus. Transcriptional repressor of genes that require a bHLH protein for their transcription. May serve as a transcriptional regulator of the Achaete-scute complex (AS-C) genes. Contributes to the neural-epidermal lineage decision during early neurogenesis. As part of the Notch signaling pathway, required to maintain the self-renewal and identity of type II neuroblasts by regulating the expression of the transcriptional repressor erm. This chain is Enhancer of split mdelta protein, found in Drosophila melanogaster (Fruit fly).